A 1206-amino-acid polypeptide reads, in one-letter code: Pre-mRNA-splicing factor prp12 (1206 aa).

Belongs to the RSE1 family. In terms of assembly, belongs to the 40S cdc5-associated complex (or cwf complex), a spliceosome sub-complex reminiscent of a late-stage spliceosome composed of the U2, U5 and U6 snRNAs and at least brr2, cdc5, cwf2/prp3, cwf3/syf1, cwf4/syf3, cwf5/ecm2, spp42/cwf6, cwf7/spf27, cwf8, cwf9, cwf10, cwf11, cwf12, prp45/cwf13, cwf14, cwf15, cwf16, cwf17, cwf18, cwf19, cwf20, cwf21, cwf22, cwf23, cwf24, cwf25, cwf26, cyp7/cwf27, cwf28, cwf29/ist3, lea1, msl1, prp5/cwf1, prp10, prp12/sap130, prp17, prp22, sap61, sap62, sap114, sap145, slu7, smb1, smd1, smd3, smf1, smg1 and syf2.

Its subcellular location is the nucleus. Involved in mRNA splicing and G2/M transition. This Schizosaccharomyces pombe (strain 972 / ATCC 24843) (Fission yeast) protein is Pre-mRNA-splicing factor prp12 (prp12).